The following is a 206-amino-acid chain: Outer-membrane lipoprotein LolB (206 aa).

The N-terminal stretch at 1–18 (MKTFKFLTALFATAILTA) is a signal peptide. Cys19 carries the N-palmitoyl cysteine lipid modification. Cys19 is lipidated: S-diacylglycerol cysteine.

The protein belongs to the LolB family. As to quaternary structure, monomer.

The protein localises to the cell outer membrane. Functionally, plays a critical role in the incorporation of lipoproteins in the outer membrane after they are released by the LolA protein. The chain is Outer-membrane lipoprotein LolB from Haemophilus influenzae (strain PittEE).